Reading from the N-terminus, the 552-residue chain is Serine/threonine-protein kinase RIO2 (552 aa).

Residues 97 to 272 (VGNQMGVGKE…DRDVKCIKDF (176 aa)) form the Protein kinase domain. Residue lysine 123 participates in ATP binding. The active-site Proton acceptor is aspartate 228. A phosphoserine mark is found at serine 332, serine 335, serine 337, serine 350, serine 362, serine 380, serine 382, serine 385, and serine 390. The short motif at 399–408 (ALEEIKGQVV) is the Nuclear export signal element. Serine 412, serine 417, and serine 442 each carry phosphoserine. Tyrosine 445 carries the post-translational modification Phosphotyrosine. Serine 548 is subject to Phosphoserine.

This sequence belongs to the protein kinase superfamily. RIO-type Ser/Thr kinase family. As to quaternary structure, associated with late 40S pre-ribosomal particles. Interacts with PLK1 (via its N-terminus). It depends on Mg(2+) as a cofactor. In terms of processing, autophosphorylated (in vitro). Phosphorylation at Ser-335, Ser-380, Ser-548 by PLK1 affects the timing of the metaphase-anaphase transition.

The protein resides in the cytoplasm. The catalysed reaction is L-seryl-[protein] + ATP = O-phospho-L-seryl-[protein] + ADP + H(+). It catalyses the reaction L-threonyl-[protein] + ATP = O-phospho-L-threonyl-[protein] + ADP + H(+). In terms of biological role, serine/threonine-protein kinase involved in the final steps of cytoplasmic maturation of the 40S ribosomal subunit. Involved in export of the 40S pre-ribosome particles (pre-40S) from the nucleus to the cytoplasm. Its kinase activity is required for the release of NOB1, PNO1 and LTV1 from the late pre-40S and the processing of 18S-E pre-rRNA to the mature 18S rRNA. Regulates the timing of the metaphase-anaphase transition during mitotic progression, and its phosphorylation, most likely by PLK1, regulates this function. This is Serine/threonine-protein kinase RIO2 from Homo sapiens (Human).